A 345-amino-acid polypeptide reads, in one-letter code: Anthranilate phosphoribosyltransferase (345 aa).

5-phospho-alpha-D-ribose 1-diphosphate-binding positions include G80, 83-84 (GD), T88, 90-93 (NIST), 108-116 (KHGNRSVSS), and S120. G80 contacts anthranilate. Residue S92 coordinates Mg(2+). N111 provides a ligand contact to anthranilate. An anthranilate-binding site is contributed by R166. Residues D225 and E226 each contribute to the Mg(2+) site.

Belongs to the anthranilate phosphoribosyltransferase family. As to quaternary structure, homodimer. Mg(2+) serves as cofactor.

The catalysed reaction is N-(5-phospho-beta-D-ribosyl)anthranilate + diphosphate = 5-phospho-alpha-D-ribose 1-diphosphate + anthranilate. It participates in amino-acid biosynthesis; L-tryptophan biosynthesis; L-tryptophan from chorismate: step 2/5. Functionally, catalyzes the transfer of the phosphoribosyl group of 5-phosphorylribose-1-pyrophosphate (PRPP) to anthranilate to yield N-(5'-phosphoribosyl)-anthranilate (PRA). This is Anthranilate phosphoribosyltransferase from Desulforamulus reducens (strain ATCC BAA-1160 / DSM 100696 / MI-1) (Desulfotomaculum reducens).